The primary structure comprises 392 residues: Succinate--CoA ligase [ADP-forming] subunit beta (392 aa).

Positions 9–248 (KGILKQFGVA…ITEEDPLEYE (240 aa)) constitute an ATP-grasp domain. ATP-binding positions include Lys-50, 57–59 (GRG), Glu-103, Met-106, and Glu-111. Positions 203 and 217 each coordinate Mg(2+). Residues Asn-268 and 325-327 (GIV) contribute to the substrate site.

The protein belongs to the succinate/malate CoA ligase beta subunit family. As to quaternary structure, heterotetramer of two alpha and two beta subunits. Mg(2+) serves as cofactor.

It catalyses the reaction succinate + ATP + CoA = succinyl-CoA + ADP + phosphate. It carries out the reaction GTP + succinate + CoA = succinyl-CoA + GDP + phosphate. It participates in carbohydrate metabolism; tricarboxylic acid cycle; succinate from succinyl-CoA (ligase route): step 1/1. Functionally, succinyl-CoA synthetase functions in the citric acid cycle (TCA), coupling the hydrolysis of succinyl-CoA to the synthesis of either ATP or GTP and thus represents the only step of substrate-level phosphorylation in the TCA. The beta subunit provides nucleotide specificity of the enzyme and binds the substrate succinate, while the binding sites for coenzyme A and phosphate are found in the alpha subunit. In Chlorobaculum parvum (strain DSM 263 / NCIMB 8327) (Chlorobium vibrioforme subsp. thiosulfatophilum), this protein is Succinate--CoA ligase [ADP-forming] subunit beta.